The following is a 771-amino-acid chain: Putative 8-amino-7-oxononanoate synthase 2 (771 aa).

The interval 1–418 is unknown; the sequence is MPTGLGYDFL…TVKAAELGEI (418 aa). Arg407 contributes to the substrate binding site. The tract at residues 419–771 is KAPA synthase; the sequence is VLLGTNSYLG…EDLTPQGAAL (353 aa). 485-486 provides a ligand contact to pyridoxal 5'-phosphate; that stretch reads GY. His510 provides a ligand contact to substrate. Pyridoxal 5'-phosphate contacts are provided by residues Ser556 and 581 to 584; that span reads DESH. Position 615 is an N6-(pyridoxal phosphate)lysine (Lys615).

In the C-terminal section; belongs to the class-II pyridoxal-phosphate-dependent aminotransferase family. BioF subfamily. Pyridoxal 5'-phosphate serves as cofactor.

It catalyses the reaction 6-carboxyhexanoyl-[ACP] + L-alanine + H(+) = (8S)-8-amino-7-oxononanoate + holo-[ACP] + CO2. Catalyzes the decarboxylative condensation of pimeloyl-[acyl-carrier protein] and L-alanine to produce 8-amino-7-oxononanoate (AON), [acyl-carrier protein], and carbon dioxide. The polypeptide is Putative 8-amino-7-oxononanoate synthase 2 (bioF2) (Mycobacterium tuberculosis (strain CDC 1551 / Oshkosh)).